The sequence spans 132 residues: Tyrosine phosphatase-like protein N2 (132 aa).

Residues 1–132 (MQGPMKNTVA…DILGRFQRVF (132 aa)) enclose the Tyrosine-protein phosphatase domain.

It belongs to the protein-tyrosine phosphatase family.

In Microplitis demolitor (Parasitoid wasp), this protein is Tyrosine phosphatase-like protein N2 (N4).